A 122-amino-acid chain; its full sequence is Large ribosomal subunit protein uL29 (122 aa).

Ser12 is modified (phosphoserine).

The protein belongs to the universal ribosomal protein uL29 family. In terms of assembly, component of the large ribosomal subunit (LSU). Mature yeast ribosomes consist of a small (40S) and a large (60S) subunit. The 40S small subunit contains 1 molecule of ribosomal RNA (18S rRNA) and at least 33 different proteins. The large 60S subunit contains 3 rRNA molecules (25S, 5.8S and 5S rRNA) and at least 46 different proteins. uL29 is associated with the polypeptide exit tunnel.

Its subcellular location is the cytoplasm. It localises to the nucleus. It is found in the nucleolus. Component of the ribosome, a large ribonucleoprotein complex responsible for the synthesis of proteins in the cell. The small ribosomal subunit (SSU) binds messenger RNAs (mRNAs) and translates the encoded message by selecting cognate aminoacyl-transfer RNA (tRNA) molecules. The large subunit (LSU) contains the ribosomal catalytic site termed the peptidyl transferase center (PTC), which catalyzes the formation of peptide bonds, thereby polymerizing the amino acids delivered by tRNAs into a polypeptide chain. The nascent polypeptides leave the ribosome through a tunnel in the LSU and interact with protein factors that function in enzymatic processing, targeting, and the membrane insertion of nascent chains at the exit of the ribosomal tunnel. The polypeptide is Large ribosomal subunit protein uL29 (rpl35) (Schizosaccharomyces pombe (strain 972 / ATCC 24843) (Fission yeast)).